We begin with the raw amino-acid sequence, 248 residues long: tRNA pseudouridine synthase A (248 aa).

The active-site Nucleophile is Asp53. Residue Tyr111 coordinates substrate.

The protein belongs to the tRNA pseudouridine synthase TruA family. In terms of assembly, homodimer.

The enzyme catalyses uridine(38/39/40) in tRNA = pseudouridine(38/39/40) in tRNA. Functionally, formation of pseudouridine at positions 38, 39 and 40 in the anticodon stem and loop of transfer RNAs. This Listeria monocytogenes serotype 4b (strain CLIP80459) protein is tRNA pseudouridine synthase A.